A 303-amino-acid polypeptide reads, in one-letter code: Recombination-associated protein RdgC (303 aa).

This sequence belongs to the RdgC family.

Its subcellular location is the cytoplasm. The protein localises to the nucleoid. May be involved in recombination. The polypeptide is Recombination-associated protein RdgC (Yersinia pseudotuberculosis serotype O:1b (strain IP 31758)).